A 401-amino-acid chain; its full sequence is Argininosuccinate synthase (401 aa).

9–17 contacts ATP; the sequence is AYSGGLDTS. Tyr-86 provides a ligand contact to L-citrulline. Residue Gly-116 coordinates ATP. The L-aspartate site is built by Thr-118, Asn-122, and Asp-123. Position 122 (Asn-122) interacts with L-citrulline. Residues Arg-126, Ser-174, Ser-183, Glu-259, and Tyr-271 each coordinate L-citrulline.

This sequence belongs to the argininosuccinate synthase family. Type 1 subfamily. Homotetramer.

It is found in the cytoplasm. It carries out the reaction L-citrulline + L-aspartate + ATP = 2-(N(omega)-L-arginino)succinate + AMP + diphosphate + H(+). Its pathway is amino-acid biosynthesis; L-arginine biosynthesis; L-arginine from L-ornithine and carbamoyl phosphate: step 2/3. The protein is Argininosuccinate synthase of Bacillus cereus (strain AH820).